A 322-amino-acid chain; its full sequence is Outer membrane protein assembly factor BamC (322 aa).

Residues 1–22 form the signal peptide; that stretch reads MISLLAVAVLAGCSNPETRSQA.

It belongs to the BamC family. Part of the Bam complex.

It is found in the cell outer membrane. Its function is as follows. Part of the outer membrane protein assembly complex, which is involved in assembly and insertion of beta-barrel proteins into the outer membrane. This Oceanimonas sp. (strain GK1 / IBRC-M 10197) protein is Outer membrane protein assembly factor BamC.